The following is a 276-amino-acid chain: Aspartate dehydrogenase domain-containing protein (276 aa).

This sequence belongs to the L-aspartate dehydrogenase family.

In Danio rerio (Zebrafish), this protein is Aspartate dehydrogenase domain-containing protein (aspdh).